The primary structure comprises 355 residues: UDP-N-acetylglucosamine--N-acetylmuramyl-(pentapeptide) pyrophosphoryl-undecaprenol N-acetylglucosamine transferase (355 aa).

UDP-N-acetyl-alpha-D-glucosamine is bound by residues 15-17 (TGG), Asn127, Arg163, Ser191, Ile245, 264-269 (ALTVSE), and Gln289.

Belongs to the glycosyltransferase 28 family. MurG subfamily.

The protein localises to the cell inner membrane. It catalyses the reaction di-trans,octa-cis-undecaprenyl diphospho-N-acetyl-alpha-D-muramoyl-L-alanyl-D-glutamyl-meso-2,6-diaminopimeloyl-D-alanyl-D-alanine + UDP-N-acetyl-alpha-D-glucosamine = di-trans,octa-cis-undecaprenyl diphospho-[N-acetyl-alpha-D-glucosaminyl-(1-&gt;4)]-N-acetyl-alpha-D-muramoyl-L-alanyl-D-glutamyl-meso-2,6-diaminopimeloyl-D-alanyl-D-alanine + UDP + H(+). Its pathway is cell wall biogenesis; peptidoglycan biosynthesis. Its function is as follows. Cell wall formation. Catalyzes the transfer of a GlcNAc subunit on undecaprenyl-pyrophosphoryl-MurNAc-pentapeptide (lipid intermediate I) to form undecaprenyl-pyrophosphoryl-MurNAc-(pentapeptide)GlcNAc (lipid intermediate II). The polypeptide is UDP-N-acetylglucosamine--N-acetylmuramyl-(pentapeptide) pyrophosphoryl-undecaprenol N-acetylglucosamine transferase (Yersinia enterocolitica serotype O:8 / biotype 1B (strain NCTC 13174 / 8081)).